Here is a 633-residue protein sequence, read N- to C-terminus: Biosynthetic arginine decarboxylase (633 aa).

The residue at position 101 (Lys101) is an N6-(pyridoxal phosphate)lysine. Residue 284-294 (VDVGGGLGVDY) participates in substrate binding.

This sequence belongs to the Orn/Lys/Arg decarboxylase class-II family. SpeA subfamily. The cofactor is Mg(2+). Pyridoxal 5'-phosphate serves as cofactor.

It catalyses the reaction L-arginine + H(+) = agmatine + CO2. Its pathway is amine and polyamine biosynthesis; agmatine biosynthesis; agmatine from L-arginine: step 1/1. Functionally, catalyzes the biosynthesis of agmatine from arginine. The polypeptide is Biosynthetic arginine decarboxylase (Aeromonas salmonicida (strain A449)).